Reading from the N-terminus, the 166-residue chain is UPF0304 protein PBPRA2768 (166 aa).

Belongs to the UPF0304 family.

The sequence is that of UPF0304 protein PBPRA2768 from Photobacterium profundum (strain SS9).